Reading from the N-terminus, the 589-residue chain is Ectoderm-neural cortex protein 1 (589 aa).

In terms of domain architecture, BTB spans 46–114 (TDVLLHAGNR…AYSSRVIINE (69 aa)). Kelch repeat units follow at residues 296–340 (ALFL…AIGC), 341–388 (KVYI…ELKH), 389–444 (CLYV…SAKL), 446–492 (LFAF…VLGN), 494–538 (IFIM…ASGN), and 539–585 (KLYV…STWK).

In terms of assembly, binds to RB1. Hypophosphorylated RB1 associates with ENC1 during neuronal differentiation, while hyperphosphorylated RB1 associates with ENC1 in undifferentiating cells. Part of a complex that contains CUL3, RBX1 and ENC1. Interacts indirectly with KEAP1. Ubiquitinated by E3 ubiquitin ligase complex formed by CUL3 and RBX1 and probably targeted for proteasome-independent degradation. Quinone-induced oxidative stress increases its ubiquitination. In terms of tissue distribution, detected in fetal brain tissue, moderate expression in fetal heart, lung and kidney. Highly expressed in adult brain, particularly high in the hippocampus and amygdala, and spinal cord. Detectable in adult pancreas. May be down-regulated in neuroblastoma tumors.

The protein localises to the nucleus matrix. The protein resides in the cytoplasm. It is found in the cytoskeleton. Functionally, actin-binding protein involved in the regulation of neuronal process formation and in differentiation of neural crest cells. Down-regulates transcription factor NF2L2/NRF2 by decreasing the rate of protein synthesis and not via a ubiquitin-mediated proteasomal degradation mechanism. The sequence is that of Ectoderm-neural cortex protein 1 (ENC1) from Homo sapiens (Human).